Reading from the N-terminus, the 525-residue chain is NAD(P)H-quinone oxidoreductase chain 4 1 (525 aa).

A run of 14 helical transmembrane segments spans residues 6–26, 36–56, 91–111, 115–135, 136–156, 169–189, 212–232, 243–263, 277–297, 314–334, 335–355, 375–397, 417–437, and 464–484; these read FPWLTTIILLPIAASLLIPII, WYALIVGLIDFALIVYAFYTS, LIILTGFITTLATLAAWPVTL, LFYFLLLAMYGGQIAVFAVQD, LLLFFLVWELELIPVYLLLAI, FILYTAGGSLFILLAALTMAF, LLLYAGFLIAYAIKLPIIPLH, TAPAHMLLAGILLKMGGYALI, FAPVLVVLGVVNIIYAALTSF, MGFVIIGFASFTDLGLSGAVL, QMVSHGLIGASLFFLVGATYD, IFAMFTACSMASLALPGMSGFVA, VIVVFLMAVGVILTPIYLLSM, and VFVIACLLVPIIGIGFYPKLL.

This sequence belongs to the complex I subunit 4 family.

Its subcellular location is the cellular thylakoid membrane. The catalysed reaction is a plastoquinone + NADH + (n+1) H(+)(in) = a plastoquinol + NAD(+) + n H(+)(out). It carries out the reaction a plastoquinone + NADPH + (n+1) H(+)(in) = a plastoquinol + NADP(+) + n H(+)(out). Functionally, NDH-1 shuttles electrons from NAD(P)H, via FMN and iron-sulfur (Fe-S) centers, to quinones in the respiratory chain. The immediate electron acceptor for the enzyme in this species is believed to be plastoquinone. Couples the redox reaction to proton translocation (for every two electrons transferred, four hydrogen ions are translocated across the cytoplasmic membrane), and thus conserves the redox energy in a proton gradient. This chain is NAD(P)H-quinone oxidoreductase chain 4 1, found in Trichormus variabilis (strain ATCC 29413 / PCC 7937) (Anabaena variabilis).